A 114-amino-acid polypeptide reads, in one-letter code: uncharacterized protein (114 aa).

C10 is an active-site residue.

Belongs to the ArsC family.

This is an uncharacterized protein from Haemophilus influenzae (strain ATCC 51907 / DSM 11121 / KW20 / Rd).